The following is a 457-amino-acid chain: Argininosuccinate lyase (457 aa).

The protein belongs to the lyase 1 family. Argininosuccinate lyase subfamily.

It is found in the cytoplasm. The enzyme catalyses 2-(N(omega)-L-arginino)succinate = fumarate + L-arginine. Its pathway is amino-acid biosynthesis; L-arginine biosynthesis; L-arginine from L-ornithine and carbamoyl phosphate: step 3/3. The chain is Argininosuccinate lyase from Erwinia tasmaniensis (strain DSM 17950 / CFBP 7177 / CIP 109463 / NCPPB 4357 / Et1/99).